The following is a 262-amino-acid chain: Small ribosomal subunit protein uS2 (262 aa).

It belongs to the universal ribosomal protein uS2 family.

In Borreliella afzelii (strain PKo) (Borrelia afzelii), this protein is Small ribosomal subunit protein uS2.